Reading from the N-terminus, the 176-residue chain is ATP-dependent protease subunit HslV (176 aa).

T5 is a catalytic residue. Na(+)-binding residues include S161, C164, and T167.

The protein belongs to the peptidase T1B family. HslV subfamily. In terms of assembly, a double ring-shaped homohexamer of HslV is capped on each side by a ring-shaped HslU homohexamer. The assembly of the HslU/HslV complex is dependent on binding of ATP.

The protein resides in the cytoplasm. The catalysed reaction is ATP-dependent cleavage of peptide bonds with broad specificity.. Its activity is regulated as follows. Allosterically activated by HslU binding. Protease subunit of a proteasome-like degradation complex believed to be a general protein degrading machinery. The protein is ATP-dependent protease subunit HslV of Thermoanaerobacter sp. (strain X514).